We begin with the raw amino-acid sequence, 537 residues long: Exodeoxyribonuclease 7 large subunit (537 aa).

A disordered region spans residues 508–537 (GEGAPVEPPQAARPSKGARTKAAQPSLFDD).

The protein belongs to the XseA family. In terms of assembly, heterooligomer composed of large and small subunits.

Its subcellular location is the cytoplasm. The enzyme catalyses Exonucleolytic cleavage in either 5'- to 3'- or 3'- to 5'-direction to yield nucleoside 5'-phosphates.. Bidirectionally degrades single-stranded DNA into large acid-insoluble oligonucleotides, which are then degraded further into small acid-soluble oligonucleotides. The chain is Exodeoxyribonuclease 7 large subunit from Azorhizobium caulinodans (strain ATCC 43989 / DSM 5975 / JCM 20966 / LMG 6465 / NBRC 14845 / NCIMB 13405 / ORS 571).